Consider the following 239-residue polypeptide: 7-cyano-7-deazaguanine synthase (239 aa).

Residue 13–23 participates in ATP binding; it reads LSGGQDSATCL. 4 residues coordinate Zn(2+): Cys-199, Cys-214, Cys-217, and Cys-220.

Belongs to the QueC family. Requires Zn(2+) as cofactor.

It carries out the reaction 7-carboxy-7-deazaguanine + NH4(+) + ATP = 7-cyano-7-deazaguanine + ADP + phosphate + H2O + H(+). The protein operates within purine metabolism; 7-cyano-7-deazaguanine biosynthesis. Functionally, catalyzes the ATP-dependent conversion of 7-carboxy-7-deazaguanine (CDG) to 7-cyano-7-deazaguanine (preQ(0)). The protein is 7-cyano-7-deazaguanine synthase of Acidovorax ebreus (strain TPSY) (Diaphorobacter sp. (strain TPSY)).